Here is a 257-residue protein sequence, read N- to C-terminus: Probable enoyl-CoA hydratase echA8 (257 aa).

The protein belongs to the enoyl-CoA hydratase/isomerase family.

It carries out the reaction a (3S)-3-hydroxyacyl-CoA = a (2E)-enoyl-CoA + H2O. The enzyme catalyses a 4-saturated-(3S)-3-hydroxyacyl-CoA = a (3E)-enoyl-CoA + H2O. Its function is as follows. Could possibly oxidize fatty acids using specific components. The protein is Probable enoyl-CoA hydratase echA8 (echA8) of Mycobacterium leprae (strain TN).